Reading from the N-terminus, the 388-residue chain is 8-amino-7-oxononanoate synthase (388 aa).

A substrate-binding site is contributed by arginine 23. Residue 110–111 (GF) coordinates pyridoxal 5'-phosphate. Position 135 (histidine 135) interacts with substrate. 3 residues coordinate pyridoxal 5'-phosphate: serine 181, histidine 209, and threonine 235. Position 238 is an N6-(pyridoxal phosphate)lysine (lysine 238). Threonine 352 contacts substrate.

It belongs to the class-II pyridoxal-phosphate-dependent aminotransferase family. BioF subfamily. Homodimer. Pyridoxal 5'-phosphate serves as cofactor.

The enzyme catalyses 6-carboxyhexanoyl-[ACP] + L-alanine + H(+) = (8S)-8-amino-7-oxononanoate + holo-[ACP] + CO2. It functions in the pathway cofactor biosynthesis; biotin biosynthesis. Catalyzes the decarboxylative condensation of pimeloyl-[acyl-carrier protein] and L-alanine to produce 8-amino-7-oxononanoate (AON), [acyl-carrier protein], and carbon dioxide. This is 8-amino-7-oxononanoate synthase from Sodalis glossinidius (strain morsitans).